Reading from the N-terminus, the 329-residue chain is Malate dehydrogenase (329 aa).

12–18 (GAAGQIG) provides a ligand contact to NAD(+). Substrate is bound by residues Arg-93 and Arg-99. NAD(+) is bound by residues Asn-106, Gln-113, and 130–132 (VGN). Positions 132 and 166 each coordinate substrate. Residue His-191 is the Proton acceptor of the active site.

The protein belongs to the LDH/MDH superfamily. MDH type 2 family.

The enzyme catalyses (S)-malate + NAD(+) = oxaloacetate + NADH + H(+). Its function is as follows. Catalyzes the reversible oxidation of malate to oxaloacetate. The protein is Malate dehydrogenase of Aromatoleum aromaticum (strain DSM 19018 / LMG 30748 / EbN1) (Azoarcus sp. (strain EbN1)).